The following is a 93-amino-acid chain: Large ribosomal subunit protein bL31B (93 aa).

Belongs to the bacterial ribosomal protein bL31 family. Type B subfamily. In terms of assembly, part of the 50S ribosomal subunit.

This is Large ribosomal subunit protein bL31B from Pseudomonas syringae pv. syringae (strain B728a).